The sequence spans 79 residues: MRLIIRAIVLLALVWIGLLMSGYGILVGSKVNAAGLGLQCHYLTARGTSTAQYLHTNSGIIGFSDCPIFRKIATVVDNG.

The first 33 residues, 1 to 33, serve as a signal peptide directing secretion; the sequence is MRLIIRAIVLLALVWIGLLMSGYGILVGSKVNA.

This is an uncharacterized protein from Salmonella typhi.